We begin with the raw amino-acid sequence, 806 residues long: MSGWPRIYYKLLNLPLSILVKSKSIPAEPAQELGLDTSRPIMYVLPYNSKADLLTLRAQCLAHDLPDPLEPLEIDGALLPRYVFIHGGPRVFTYYTPKEESVKLFHDYLDLHRSNPALDVQMVPVSVMFGRAPGREKGEDNPPLRMLNGVQKFFAISWLGRDSFVRFSPSVSLRRMADEHGTDKIIAQKLARVARMHFARQRLAAVGPRLPARQDLFNKLLASKAIARAVEDEARSKKISHEKAQQNAIALMEEIAANFSYEMIRLTDRILGFTWNRLYQGINVHNAERVRQLAHDGHEIVYVPCHRSHMDYLLLSYVLYHQGLVPPHIAAGINLNFWPAGPIFRRLGAFFIRRTFKGNKLYSTVFREYLGELFSRGYSVEYFVEGGRSRTGRLLDPKTGTLSMTIQAMLRGGTRPITLVPIYIGYEHVMEVGTYAKELRGATKEKESLPQMLKGLSKLRNLGQGYVNFGEPMPLMTYLNQHVPEWRESIDPIEAIRPAWLTPTVNSIAADLMVRINNAGAANAMNLCCTALLASRQRSLTREQLTEQLDCYLDLMRNVPYSTDSTVPAASAGELIAHALQMNKFEVEKDTIGDIIILPREQAVLMTYYRNNIAHMLIMPSLMAAIITQHRRISRDALQQHVEALYPMLKAELFLRWEREELASVIDALASEIQRQGLITLQDDELHINPTHSRTLQLLAAGARETLQRYAITFWLLSANPSINRSTLEKESRTVAQRLSVLHGINAPEFFDKAVFSSLVLTLRDEGYISDTGDAEPAETMKIYQMLADLITSDVRLTIESATQGE.

The HXXXXD motif motif lies at 305-310 (CHRSHM).

Belongs to the GPAT/DAPAT family.

Its subcellular location is the cell inner membrane. It catalyses the reaction sn-glycerol 3-phosphate + an acyl-CoA = a 1-acyl-sn-glycero-3-phosphate + CoA. The protein operates within phospholipid metabolism; CDP-diacylglycerol biosynthesis; CDP-diacylglycerol from sn-glycerol 3-phosphate: step 1/3. The protein is Glycerol-3-phosphate acyltransferase of Salmonella paratyphi B (strain ATCC BAA-1250 / SPB7).